We begin with the raw amino-acid sequence, 310 residues long: HTH-type transcriptional regulator CbbR (310 aa).

The HTH lysR-type domain occupies 7 to 64 (ITLKQLRALVAVAGSASLTGGATRLGLTPPAIHSQIRNLEEAFGVPLLHRPPETGSFT). Residues 24-43 (LTGGATRLGLTPPAIHSQIR) constitute a DNA-binding region (H-T-H motif).

This sequence belongs to the LysR transcriptional regulatory family.

Transcriptional activator for the cbb operon for RuBisCO and other Calvin cycle genes. This Cereibacter sphaeroides (Rhodobacter sphaeroides) protein is HTH-type transcriptional regulator CbbR (cbbR).